We begin with the raw amino-acid sequence, 237 residues long: Ribosomal RNA small subunit methyltransferase G (237 aa).

S-adenosyl-L-methionine-binding positions include Gly-78, Phe-83, 129 to 130 (AE), and Arg-148. Residues 216 to 237 (SKKKETPNKYPRKAGTPNKKPL) form a disordered region.

It belongs to the methyltransferase superfamily. RNA methyltransferase RsmG family.

It localises to the cytoplasm. Its function is as follows. Specifically methylates the N7 position of a guanine in 16S rRNA. The protein is Ribosomal RNA small subunit methyltransferase G of Streptococcus agalactiae serotype III (strain NEM316).